The sequence spans 161 residues: Lipoprotein LpqH (161 aa).

An N-terminal signal peptide occupies residues 1 to 21; the sequence is MNRQLRFAVAGPEILAAVVSG. Positions 21 to 46 are enriched in low complexity; sequence GCSSGNKSAPSSSASSSSTSPSASSG. Positions 21–49 are disordered; it reads GCSSGNKSAPSSSASSSSTSPSASSGGAA. Residue Cys22 is the site of N-palmitoyl cysteine attachment. The S-diacylglycerol cysteine moiety is linked to residue Cys22.

It belongs to the mycobacterial 19 kDa antigen family. Post-translationally, modified by Lgt on Cys-22 with an S-linked diacylglycerol with a mixture of C16, C18 and C19 fatty acids, signal peptide is removed by LspA, modifed by Lnt with an amide-linked mixture of C16 and C19 fatty acids.

It is found in the cell membrane. Functionally, might be involved in ligand transport. A host TLR2 agonist, modifies host gene expression in response to pathogen. The chain is Lipoprotein LpqH (lpqH) from Mycobacterium avium.